We begin with the raw amino-acid sequence, 295 residues long: Regucalcin (295 aa).

Glu-18 contributes to the a divalent metal cation binding site. The substrate site is built by Arg-100, Asn-102, and Asp-120. A divalent metal cation is bound by residues Asn-150 and Asp-200. The active-site Proton donor/acceptor is the Asp-200.

This sequence belongs to the SMP-30/CGR1 family. Zn(2+) is required as a cofactor. It depends on Mn(2+) as a cofactor. Requires Ca(2+) as cofactor. Mg(2+) serves as cofactor.

Its subcellular location is the cytoplasm. It carries out the reaction D-glucono-1,5-lactone + H2O = D-gluconate + H(+). It participates in cofactor biosynthesis; L-ascorbate biosynthesis via UDP-alpha-D-glucuronate pathway; L-ascorbate from UDP-alpha-D-glucuronate: step 3/4. Functionally, gluconolactonase with low activity towards other sugar lactones, including gulonolactone and galactonolactone. Catalyzes a key step in ascorbic acid (vitamin C) biosynthesis. Can also hydrolyze diisopropyl phosphorofluoridate and phenylacetate (in vitro). Calcium-binding protein. Modulates Ca(2+) signaling, and Ca(2+)-dependent cellular processes and enzyme activities. This chain is Regucalcin, found in Danio rerio (Zebrafish).